We begin with the raw amino-acid sequence, 693 residues long: Elongation factor G (693 aa).

Positions 8 to 282 (KNTRNIGIMA…AAIEYLPSPL (275 aa)) constitute a tr-type G domain. Residues 17 to 24 (AHIDAGKT), 81 to 85 (DTPGH), and 135 to 138 (NKMD) contribute to the GTP site.

Belongs to the TRAFAC class translation factor GTPase superfamily. Classic translation factor GTPase family. EF-G/EF-2 subfamily.

The protein localises to the cytoplasm. Its function is as follows. Catalyzes the GTP-dependent ribosomal translocation step during translation elongation. During this step, the ribosome changes from the pre-translocational (PRE) to the post-translocational (POST) state as the newly formed A-site-bound peptidyl-tRNA and P-site-bound deacylated tRNA move to the P and E sites, respectively. Catalyzes the coordinated movement of the two tRNA molecules, the mRNA and conformational changes in the ribosome. The protein is Elongation factor G of Macrococcus caseolyticus (strain JCSC5402) (Macrococcoides caseolyticum).